The following is a 492-amino-acid chain: Transmembrane protein 39B (492 aa).

The interval 1-54 is disordered; sequence MGGRRGPNRTSYCRNPLCEPGSSGGSSGSHTSSASVTSVRSRTRSSSGTGLSSP. N8 carries an N-linked (GlcNAc...) asparagine glycan. Over residues 28–53 the composition is skewed to low complexity; the sequence is GSHTSSASVTSVRSRTRSSSGTGLSS. Transmembrane regions (helical) follow at residues 77–97, 115–135, 153–175, 185–205, 288–308, 322–342, 421–441, and 447–467; these read SILF…VHYI, TSLN…IVLG, SLFR…GWSL, TYSF…IPFL, EVLV…VWFV, LFLL…LPAS, ILNI…YSLM, and HQTI…FKLL.

It belongs to the TMEM39 family.

Its subcellular location is the endoplasmic reticulum membrane. Its function is as follows. May protect the cells against DNA damage caused by exposure to the cold-warming stress and facilitates tissue damage repair during the recovery phase. In Homo sapiens (Human), this protein is Transmembrane protein 39B.